The sequence spans 423 residues: Adenosylmethionine-8-amino-7-oxononanoate aminotransferase (423 aa).

Tryptophan 51 provides a ligand contact to substrate. 111-112 (GS) provides a ligand contact to pyridoxal 5'-phosphate. Substrate is bound at residue tyrosine 144. Residue aspartate 243 coordinates pyridoxal 5'-phosphate. Substrate-binding residues include lysine 272 and glycine 306. Lysine 272 bears the N6-(pyridoxal phosphate)lysine mark. 307 to 308 (PT) serves as a coordination point for pyridoxal 5'-phosphate. Arginine 390 serves as a coordination point for substrate.

The protein belongs to the class-III pyridoxal-phosphate-dependent aminotransferase family. BioA subfamily. In terms of assembly, homodimer. It depends on pyridoxal 5'-phosphate as a cofactor.

It is found in the cytoplasm. The enzyme catalyses (8S)-8-amino-7-oxononanoate + S-adenosyl-L-methionine = S-adenosyl-4-methylsulfanyl-2-oxobutanoate + (7R,8S)-7,8-diammoniononanoate. Its pathway is cofactor biosynthesis; biotin biosynthesis; 7,8-diaminononanoate from 8-amino-7-oxononanoate (SAM route): step 1/1. In terms of biological role, catalyzes the transfer of the alpha-amino group from S-adenosyl-L-methionine (SAM) to 7-keto-8-aminopelargonic acid (KAPA) to form 7,8-diaminopelargonic acid (DAPA). It is the only aminotransferase known to utilize SAM as an amino donor. The chain is Adenosylmethionine-8-amino-7-oxononanoate aminotransferase from Corynebacterium glutamicum (strain ATCC 13032 / DSM 20300 / JCM 1318 / BCRC 11384 / CCUG 27702 / LMG 3730 / NBRC 12168 / NCIMB 10025 / NRRL B-2784 / 534).